A 550-amino-acid chain; its full sequence is Zinc finger protein squeeze (550 aa).

Positions 73 to 105 are enriched in low complexity; that stretch reads QQQQQQQQQEMLQQQQQHQAHQEQQQQQQQQQQ. Residues 73–179 are disordered; sequence QQQQQQQQQE…GGGGGDGDQS (107 aa). Residues 106-117 are compositionally biased toward basic residues; it reads QHHHQQQQHHLK. Over residues 141–156 the composition is skewed to polar residues; the sequence is RSPQRPLMSSGSNASS. The span at 164–176 shows a compositional bias: gly residues; it reads SGGGPGGGGGGDG. C2H2-type zinc fingers lie at residues 182–204, 210–232, 238–262, 268–290, and 299–321; these read YKCASCSKSFANSSYLSQHTRIH, YRCEICQRKFTQLSHLQQHIRTH, YKCRHAGCPKAFSQLSNLQSHSRCH, FKCNSCYKCFADEMTLLEHIPKH, and HICNLCGKSYTQETYLQKHLQKH. A disordered region spans residues 399–485; the sequence is LQQHQQQQQQ…VPPSHLQQHR (87 aa). Over residues 400 to 416 the composition is skewed to low complexity; it reads QQHQQQQQQQQQDMLQQ. At Thr424 the chain carries Phosphothreonine. Ser428 and Ser430 each carry phosphoserine. The segment covering 444–460 has biased composition (low complexity); that stretch reads QTTPQHHLQQQQQQQQP. A phosphotyrosine mark is found at Tyr494 and Tyr496.

This sequence belongs to the krueppel C2H2-type zinc-finger protein family. Interacts with nab; which acts as a coactivator. Interacts with ap.

Its subcellular location is the nucleus. Its function is as follows. Transcription factor involved in neuronal fate specification. First required in embryonic CNS development to define the number of cells that express apterous (ap) in the ap thoracic cluster of interneurons. Later on, it plays a central role in the combinatorial code of transcription factors that specifies the fate of the Tv neuron in the ap cluster by participating in the transcription regulation of FMRFa in Tv cells. Also required for projection neuron dendritic targeting. This chain is Zinc finger protein squeeze (sqz), found in Drosophila pseudoobscura pseudoobscura (Fruit fly).